The chain runs to 259 residues: MSSNSVKRAPTTATQRLKQDYLRIKKDPVPYICAEPLPSNILEWHYVVRGPEMTPYEGGYYHGKLIFPREFPFKPPSIYMITPNGRFKCNTRLCLSITDFHPDTWNPAWSVSTILTGLLSFMVEKGPTLGSIETSDFTKRQLAAQSLVFNLKDKVFCELFPEVVEEIKQKQKAQDELSSRPQALPLPDVVPDGETHHGQHGLPLLNGHAPGAGPHLAGLQQANRHHGLLGGALANLFVIVGFAAFAYTVKYVLRSIAQE.

Over 1–226 the chain is Cytoplasmic; it reads MSSNSVKRAP…AGLQQANRHH (226 aa). Residues 12–162 enclose the UBC core domain; the sequence is TATQRLKQDY…DKVFCELFPE (151 aa). Cys-94 (glycyl thioester intermediate) is an active-site residue. Residues 174-200 form a disordered region; it reads QDELSSRPQALPLPDVVPDGETHHGQH. The helical; Anchor for type IV membrane protein transmembrane segment at 227–247 threads the bilayer; that stretch reads GLLGGALANLFVIVGFAAFAY. The Lumenal portion of the chain corresponds to 248–259; that stretch reads TVKYVLRSIAQE.

The protein belongs to the ubiquitin-conjugating enzyme family.

It is found in the endoplasmic reticulum membrane. The enzyme catalyses S-ubiquitinyl-[E1 ubiquitin-activating enzyme]-L-cysteine + [E2 ubiquitin-conjugating enzyme]-L-cysteine = [E1 ubiquitin-activating enzyme]-L-cysteine + S-ubiquitinyl-[E2 ubiquitin-conjugating enzyme]-L-cysteine.. It functions in the pathway protein modification; protein ubiquitination. Catalyzes the covalent attachment of ubiquitin to other proteins. Seems to function in the selective degradation of misfolded membrane proteins from the endoplasmic reticulum (ERAD). In cooperation with the GATOR2 complex, catalyzes 'Lys-6'-linked ubiquitination of NPRL2. The protein is Ubiquitin-conjugating enzyme E2 J2 (UBE2J2) of Bos taurus (Bovine).